Here is a 296-residue protein sequence, read N- to C-terminus: UBX domain-containing protein 1-A (296 aa).

Residues 1-42 (MAECSTLESLIEMGFSSTRAEKALTATGNQGIEPAMDWLVEH) form the UBA domain. The tract at residues 43–216 (EDDPDIDEPS…VQEPPTKKEY (174 aa)) is disordered. Positions 61 to 75 (TDTADTTDTTDTTDT) are enriched in low complexity. 3 stretches are compositionally biased toward basic and acidic residues: residues 86–100 (PLTE…KRMM), 107–123 (QNER…EQEK), and 138–178 (KMQE…DRAR). Residues 87–177 (LTEEEKEKQT…KIARDKADRA (91 aa)) adopt a coiled-coil conformation. A compositionally biased stretch (low complexity) spans 191 to 206 (PAETSIPATTPSPSSP). Residues 214 to 293 (KEYDQCRIQV…GLVPTAVLIV (80 aa)) enclose the UBX domain.

It is found in the cytoplasm. In terms of biological role, component of a complex required to couple deglycosylation and proteasome-mediated degradation of misfolded proteins in the endoplasmic reticulum that are retrotranslocated in the cytosol. Involved in ubiquitin-proteasome systems. The chain is UBX domain-containing protein 1-A (ubxn1-a) from Xenopus laevis (African clawed frog).